The sequence spans 371 residues: Flagellar P-ring protein (371 aa).

Residues methionine 1–alanine 28 form the signal peptide.

Belongs to the FlgI family. As to quaternary structure, the basal body constitutes a major portion of the flagellar organelle and consists of four rings (L,P,S, and M) mounted on a central rod.

The protein resides in the periplasm. Its subcellular location is the bacterial flagellum basal body. Functionally, assembles around the rod to form the L-ring and probably protects the motor/basal body from shearing forces during rotation. In Anaeromyxobacter dehalogenans (strain 2CP-C), this protein is Flagellar P-ring protein.